The primary structure comprises 1466 residues: Adhesion G protein-coupled receptor L1 (1466 aa).

Residues 1-28 (MARLAAALWSLCVTTVLVTSATQGLSRA) form the signal peptide. Residues 29–852 (GLPFGLMRRE…EIYQGRINEL (824 aa)) lie on the Extracellular side of the membrane. Positions 40–129 (ACEGYPIELR…KYLEVQYDCV (90 aa)) constitute an SUEL-type lectin domain. 5 disulfides stabilise this stretch: cysteine 41–cysteine 71, cysteine 50–cysteine 128, cysteine 83–cysteine 115, cysteine 96–cysteine 102, and cysteine 135–cysteine 317. Residue glutamate 42 participates in alpha-L-rhamnose binding. An N-linked (GlcNAc...) asparagine glycan is attached at asparagine 98. Residue 117–120 (GTYK) coordinates alpha-L-rhamnose. Positions 134–393 (VCPGTLQKVL…VVRYSLEFGP (260 aa)) constitute an Olfactomedin-like domain. The interval 395–463 (DPSAGPATSP…APAPSTRRPP (69 aa)) is disordered. A compositionally biased stretch (low complexity) spans 400 to 436 (PATSPPLSTTTTARPTPLTSTASPAATTPLRRAPLTT). Pro residues predominate over residues 448 to 463 (DLPPATAPAPSTRRPP). 2 cysteine pairs are disulfide-bonded: cysteine 475-cysteine 510 and cysteine 498-cysteine 527. Asparagine 526, asparagine 635, asparagine 736, asparagine 795, asparagine 800, and asparagine 821 each carry an N-linked (GlcNAc...) asparagine glycan. The region spanning 664 to 845 (PARFLAAKQN…AVLMAHREIY (182 aa)) is the GAIN-B domain. Cystine bridges form between cysteine 796/cysteine 827 and cysteine 815/cysteine 829. Positions 796–845 (CSFWNYSERSMLGYWSTQGCRLVESNKTHTTCACSHLTNFAVLMAHREIY) are GPS. The chain crosses the membrane as a helical span at residues 853 to 873 (LLSVITWVGIVISLVCLAICI). Topologically, residues 874-887 (STFCFLRGLQTDRN) are cytoplasmic. A helical membrane pass occupies residues 888–908 (TIHKNLCINLFLAELLFLVGI). Residues 909-914 (DKTQYE) lie on the Extracellular side of the membrane. Residues 915-935 (VACPIFAGLLHYFFLAAFSWL) traverse the membrane as a helical segment. Over 936–958 (CLEGVHLYLLLVEVFESEYSRTK) the chain is Cytoplasmic. The chain crosses the membrane as a helical span at residues 959 to 979 (YYYLGGYCFPALVVGIAAAID). The Extracellular segment spans residues 980 to 996 (YRSYGTEKACWLRVDNY). A helical membrane pass occupies residues 997 to 1017 (FIWSFIGPVSFVIVVNLVFLM). Residues 1018 to 1044 (VTLHKMIRSSSVLKPDSSRLDNIKSWA) are Cytoplasmic-facing. The helical transmembrane segment at 1045-1065 (LGAIALLFLLGLTWAFGLLFI) threads the bilayer. The Extracellular segment spans residues 1066 to 1069 (NKES). Residues 1070–1090 (VVMAYLFTTFNAFQGVFIFVF) traverse the membrane as a helical segment. The Cytoplasmic segment spans residues 1091–1466 (HCALQKKVHK…DGQMQLVTSL (376 aa)). At arginine 1188 the chain carries Omega-N-methylarginine. Serine 1214 carries the post-translational modification Phosphoserine. Disordered regions lie at residues 1242–1267 (FNNS…RGRN), 1288–1319 (RGAS…GPGS), 1352–1421 (ESES…SRPP), and 1443–1466 (YLAA…VTSL). Over residues 1296–1307 (GPPPEPPVPPVP) the composition is skewed to pro residues. Serine 1319 bears the Phosphoserine mark. Residues 1400 to 1412 (ALPPPPPAPPGPP) are compositionally biased toward pro residues. Residues serine 1448 and serine 1465 each carry the phosphoserine modification.

The protein belongs to the G-protein coupled receptor 2 family. Adhesion G-protein coupled receptor (ADGR) subfamily. As to quaternary structure, forms a heterodimer, consisting of a large extracellular region (p120) non-covalently linked to a seven-transmembrane moiety (p85). Interacts with syntaxin and with proteins of the SHANK family via the PDZ domain. Interacts (via extracellular domain) with FLRT1, FLRT2 and FLRT3 (via extracellular domain). Autoproteolytically cleaved into 2 subunits, an extracellular subunit and a seven-transmembrane subunit. This proteolytic processing takes place early in the biosynthetic pathway, either in the endoplasmic reticulum or in the early compartment of the Golgi apparatus.

It is found in the cell membrane. It localises to the cell projection. Its subcellular location is the axon. The protein localises to the growth cone. The protein resides in the synapse. It is found in the presynaptic cell membrane. It localises to the synaptosome. Calcium-independent receptor of high affinity for alpha-latrotoxin, an excitatory neurotoxin present in black widow spider venom which triggers massive exocytosis from neurons and neuroendocrine cells. Receptor for TENM2 that mediates heterophilic synaptic cell-cell contact and postsynaptic specialization. Receptor probably implicated in the regulation of exocytosis. In Mus musculus (Mouse), this protein is Adhesion G protein-coupled receptor L1.